The sequence spans 408 residues: Serine/threonine transporter SstT (408 aa).

A run of 9 helical transmembrane segments spans residues 19 to 39 (SLVSQIIVAIILASLLAVISP), 48 to 68 (LGSLFVNALKAVAPILVLVLV), 86 to 106 (IVGLYFLGTLSAALVAVLLSF), 143 to 163 (VTAVASGNFIAVLAWGLGLGF), 193 to 213 (FAPLGIFGLVANTIATTGFSA), 223 to 243 (VLLSAMLIIALLVNPLIVFII), 294 to 314 (IPLGATINMAGAAITITVLTL), 322 to 342 (IEVSFATAILLSVVASISACG), and 367 to 387 (VAMQVVAIGFIIGVIQDSAET).

It belongs to the dicarboxylate/amino acid:cation symporter (DAACS) (TC 2.A.23) family.

It is found in the cell inner membrane. The enzyme catalyses L-serine(in) + Na(+)(in) = L-serine(out) + Na(+)(out). The catalysed reaction is L-threonine(in) + Na(+)(in) = L-threonine(out) + Na(+)(out). Involved in the import of serine and threonine into the cell, with the concomitant import of sodium (symport system). This Colwellia psychrerythraea (strain 34H / ATCC BAA-681) (Vibrio psychroerythus) protein is Serine/threonine transporter SstT.